The chain runs to 687 residues: MAVLCPARVSVAENKKFKLHTLSAMMMGLFTGSFAYAETQNTSNQEQEMPVLVVIGEKTQRSIYETSASVEVFDQDTIERTPGATEIDDLLQLIPNLVDSGQSNNMPTIRGIDGSGPSVGGLASFAGTSPRLNMSIDGRSLTYSEIAFGPRSLWDMQQVEIYLGPQSYIQGRNTSAGAIVMKSNDPTHHFESAVKAGIGESDYSQTAGMISAPIIQDELAFRLSFDQQKRDSFVDLAAFEPAGDPKKIEMNSVRGKLLYEPSALDGFKTTLTLSHMDSRGPQTENINVAGNEAFRPVYETASFTTAWDIIWHLNDLFTFENNLVYADFSYDRYTNPNSRGDFNTDGKEFHIEPLLRYIALDGSVNTLIGARYYQSSQDDMYIDAASAYPMDGRTKAKSVFAEVTYALTPSINVNLAGRFEREQVKRNVSHPRYKLDYDETSSVFLPKLDVAYTPVQGQTYGIKAAKGYNASGAGLAFNSMQFTGFRPYEFEQESIWNYEFYTRHRFSHSVEVLTNLFYNDFDSMQMTQTTSSGDVFIANLDEASTYGAEIGSRWYATSSLELFANLGLLKTEFKETTGNTKELPRAPKMSANVGLLYDFGQGFEFSSNAAYTGSYFSESGNSEKFAIDSYWVANAQLAYVFEHGRATLYATNLLDSDKTTLYLSTNNTLDQLKQQPRMIGASVQLNF.

Residues methionine 1–alanine 37 form the signal peptide. Positions serine 62–asparagine 184 constitute a TBDR plug domain. The TBDR beta-barrel domain occupies histidine 189–phenylalanine 687.

Belongs to the TonB-dependent receptor family.

It localises to the cell outer membrane. In terms of biological role, involved in the uptake of iron in complex with vibriobactin, a catecholate siderophore synthesized by V.cholerae. Binds and transports ferric vibriobactin across the outer membrane. The energy source is provided by the inner membrane TonB system. The sequence is that of Ferric vibriobactin receptor ViuA from Vibrio cholerae serotype O1 (strain ATCC 39541 / Classical Ogawa 395 / O395).